We begin with the raw amino-acid sequence, 155 residues long: MKIRSLSRFVLASTMFASFTASAVPGLWQQGYGQGNAEYSVTDASGKMFTINCTGNPDQNGIYQHSVFLILAGDKTVSSHDDSTGITVVMDHKQYAIPSTLGWRNGDNAWFSFIMDIRKARQFDVYVNDQKVGSFNPDVRNAQKVLPTLADCTND.

An N-terminal signal peptide occupies residues 1–23 (MKIRSLSRFVLASTMFASFTASA).

The protein to E.coli YkfB.

This is an uncharacterized protein from Escherichia coli (strain K12).